We begin with the raw amino-acid sequence, 234 residues long: Sugar fermentation stimulation protein A (234 aa).

The H-T-H motif DNA-binding region spans 201-220; it reads LLSEAQQRGVEILAYKAELS.

Belongs to the SfsA family.

Functionally, binds to DNA non-specifically. Could be a regulatory factor involved in maltose metabolism. The chain is Sugar fermentation stimulation protein A from Escherichia coli (strain SMS-3-5 / SECEC).